The primary structure comprises 340 residues: Aldo-keto reductase yakc [NADP(+)] (340 aa).

The active-site Proton donor is Y56. Residue H126 coordinates substrate. Residue 208–218 (APLGRGFLTGA) participates in NADP(+) binding.

Belongs to the aldo/keto reductase family. Aldo/keto reductase 2 subfamily. In terms of assembly, monomer.

This chain is Aldo-keto reductase yakc [NADP(+)] (yakc), found in Schizosaccharomyces pombe (strain 972 / ATCC 24843) (Fission yeast).